The sequence spans 455 residues: Mu-like prophage FluMu DNA circularization protein (455 aa).

The H-T-H motif DNA-binding region spans 368 to 387 (VILDNADAEQWTSYAALEQY).

To phage Mu protein N.

The polypeptide is Mu-like prophage FluMu DNA circularization protein (Haemophilus influenzae (strain ATCC 51907 / DSM 11121 / KW20 / Rd)).